The primary structure comprises 125 residues: SOSS complex subunit C homolog B (125 aa).

Disordered stretches follow at residues 44-73 (PAPQLLGQPTTTTATPDLVSTNSTPPRAAF) and 105-125 (PATPSTTTPPITPIANANNPK).

This sequence belongs to the SOSS-C family.

In Drosophila willistoni (Fruit fly), this protein is SOSS complex subunit C homolog B.